The following is a 654-amino-acid chain: Interferon-induced GTP-binding protein Mx1 (654 aa).

An N-acetylmethionine modification is found at Met1. 2 stretches are compositionally biased toward basic and acidic residues: residues 1–12 and 23–32; these read MVLSDLDIKEPD and DMVREHETES. The disordered stretch occupies residues 1–33; it reads MVLSDLDIKEPDSPESGLNGSDDMVREHETESK. A Dynamin-type G domain is found at 62–335; the sequence is DLALPAIAVI…LIMHICKTLP (274 aa). The segment at 72-79 is G1 motif; it reads GDQSSGKS. 72 to 79 lines the GTP pocket; the sequence is GDQSSGKS. The segment at 97–99 is G2 motif; that stretch reads VTR. The G3 motif stretch occupies residues 173 to 176; it reads DLPG. GTP contacts are provided by residues 173–177 and 242–245; these read DLPGI and TKPD. Residues 242–245 are G4 motif; the sequence is TKPD. The interval 274–277 is G5 motif; sequence KCRG. The bundle signaling element (BSE) stretch occupies residues 336-361; the sequence is LLENQIKETHQRITEELQKYGKDIPE. Positions 361 to 528 are middle domain; it reads EEESEKMFSL…HFQMEQLVYC (168 aa). The stalk stretch occupies residues 362 to 624; that stretch reads EESEKMFSLI…KDQYDWLLKE (263 aa). Positions 544-563 are disordered; that stretch reads EAEEEKKKKSNHYYQSEDSE. Residues 549-552 are critical for lipid-binding; sequence KKKK. Residues 566–654 form the GED domain; sequence TAEIFQHLMA…ARQRLAKFPG (89 aa).

It belongs to the TRAFAC class dynamin-like GTPase superfamily. Dynamin/Fzo/YdjA family. As to quaternary structure, homooligomer. Oligomerizes into multimeric filamentous or ring-like structures by virtue of its stalk domain. Oligomerization is critical for GTPase activity, protein stability, and recognition of viral target structures. Interacts with TRPC1, TRPC3, TRPC4, TRPC5, TRPC6 and TRPC7. Interacts with HSPA5. Interacts with DDX39A and DDX39B. Interacts with TUBB/TUBB5. ISGylated.

It is found in the cytoplasm. The protein resides in the endoplasmic reticulum membrane. Its subcellular location is the perinuclear region. In terms of biological role, interferon-induced dynamin-like GTPase with antiviral activity. In Ovis aries (Sheep), this protein is Interferon-induced GTP-binding protein Mx1 (MX1).